Reading from the N-terminus, the 899-residue chain is DNA mismatch repair protein MutS (899 aa).

A disordered region spans residues 1 to 20 (MGLQKKTDPEQAQADSAASR). 631 to 638 (GPNMGGKS) is an ATP binding site. The disordered stretch occupies residues 832 to 852 (PPTPDDDEDDFGAAPSAVPAP). Over residues 843 to 852 (GAAPSAVPAP) the composition is skewed to low complexity.

It belongs to the DNA mismatch repair MutS family.

This protein is involved in the repair of mismatches in DNA. It is possible that it carries out the mismatch recognition step. This protein has a weak ATPase activity. The sequence is that of DNA mismatch repair protein MutS from Cupriavidus necator (strain ATCC 17699 / DSM 428 / KCTC 22496 / NCIMB 10442 / H16 / Stanier 337) (Ralstonia eutropha).